We begin with the raw amino-acid sequence, 664 residues long: 1,4-alpha-glucan branching enzyme GlgB 2 (664 aa).

Positions 1-17 (MGGKEMRNCKELKHEKN) are enriched in basic and acidic residues. The segment at 1–31 (MGGKEMRNCKELKHEKNGNVTEKVGKNKGKS) is disordered. The active-site Nucleophile is Asp-342. The Proton donor role is filled by Glu-395.

It belongs to the glycosyl hydrolase 13 family. GlgB subfamily. As to quaternary structure, monomer.

It catalyses the reaction Transfers a segment of a (1-&gt;4)-alpha-D-glucan chain to a primary hydroxy group in a similar glucan chain.. It functions in the pathway glycan biosynthesis; glycogen biosynthesis. In terms of biological role, catalyzes the formation of the alpha-1,6-glucosidic linkages in glycogen by scission of a 1,4-alpha-linked oligosaccharide from growing alpha-1,4-glucan chains and the subsequent attachment of the oligosaccharide to the alpha-1,6 position. This is 1,4-alpha-glucan branching enzyme GlgB 2 (glgB2) from Clostridium perfringens (strain 13 / Type A).